Consider the following 370-residue polypeptide: Probable phosphoserine aminotransferase (370 aa).

Arg-45 contacts L-glutamate. Residues 79 to 80 (GT), Trp-105, Thr-154, Asp-175, and Gln-198 contribute to the pyridoxal 5'-phosphate site. The residue at position 199 (Lys-199) is an N6-(pyridoxal phosphate)lysine. Pyridoxal 5'-phosphate is bound at residue 240–241 (NT).

The protein belongs to the class-V pyridoxal-phosphate-dependent aminotransferase family. SerC subfamily. As to quaternary structure, homodimer. Pyridoxal 5'-phosphate serves as cofactor.

The catalysed reaction is O-phospho-L-serine + 2-oxoglutarate = 3-phosphooxypyruvate + L-glutamate. It catalyses the reaction 4-(phosphooxy)-L-threonine + 2-oxoglutarate = (R)-3-hydroxy-2-oxo-4-phosphooxybutanoate + L-glutamate. Its pathway is amino-acid biosynthesis; L-serine biosynthesis; L-serine from 3-phospho-D-glycerate: step 2/3. It participates in cofactor biosynthesis; pyridoxine 5'-phosphate biosynthesis; pyridoxine 5'-phosphate from D-erythrose 4-phosphate: step 3/5. Functionally, catalyzes the reversible conversion of 3-phosphohydroxypyruvate to phosphoserine and of 3-hydroxy-2-oxo-4-phosphonooxybutanoate to phosphohydroxythreonine. This is Probable phosphoserine aminotransferase from Caenorhabditis elegans.